Consider the following 94-residue polypeptide: Neutrophil defensin 1 (94 aa).

The N-terminal stretch at 1–19 (MRTLAILAAILLVALQAQA) is a signal peptide. Positions 20-64 (EPLQARADEVAAAPEQIPADNPEVVVSLAWDESLAPKHPGSRKNV) are excised as a propeptide. 3 disulfide bridges follow: cysteine 66/cysteine 94, cysteine 68/cysteine 83, and cysteine 73/cysteine 93. Position 78 is an ADP-ribosylarginine; by ART1 (arginine 78). At tyrosine 85 the chain carries Phosphotyrosine. Position 88 is an ADP-ribosylarginine; by ART1 (arginine 88).

Belongs to the alpha-defensin family. As to quaternary structure, tetramer. Dimer. Interacts with RETN. Post-translationally, ADP-ribosylation drastically reduces cytotoxic and antibacterial activities, and enhances IL8 production.

The protein localises to the secreted. In terms of biological role, effector molecule of the innate immune system that acts via antibiotic-like properties against a broad array of infectious agents including bacteria, fungi, and viruses or by promoting the activation and maturation of some APCs. Interacts with the essential precursor of cell wall synthesis lipid II to inhibit bacterial cell wall synthesis. Inhibits adenovirus infection via inhibition of viral disassembly at the vertex region, thereby restricting the release of internal capsid protein pVI, which is required for endosomal membrane penetration during cell entry. In addition, interaction with adenovirus capsid leads to the redirection of viral particles to TLR4 thereby promoting a NLRP3-mediated inflammasome response and interleukin 1-beta (IL-1beta) release. Induces the production of proinflammatory cytokines including type I interferon (IFN) in plasmacytoid dendritic cells (pDCs) by triggering the degradation of NFKBIA and nuclear translocation of IRF1, both of which are required for activation of pDCs. The chain is Neutrophil defensin 1 (DEFA1) from Pan troglodytes (Chimpanzee).